The primary structure comprises 534 residues: Glucomannan 4-beta-mannosyltransferase 2 (534 aa).

The helical transmembrane segment at 36-56 (VIVPLLQLAVYICLLMSVMLL) threads the bilayer. The active site involves D136. Residues D195 and D197 each contribute to the substrate site. The active site involves D289. Helical transmembrane passes span 368–388 (IIAHWVTFCFYCVVLPLTILV), 404–426 (IITILNSVGTPRSIHLLFYWILF), 483–503 (LNTLELGFAAFLFVCGCYDFV), and 509–529 (YFIYLFLQTMSFFISGLGWIG).

It belongs to the glycosyltransferase 2 family. Plant cellulose synthase-like A subfamily.

It localises to the golgi apparatus membrane. It catalyses the reaction GDP-mannose + (glucomannan)n = GDP + (glucomannan)n+1.. Possesses glucomannan synthase and mannan synthase activities in vitro. Mannan synthase consists of a 4-beta-mannosyltransferase activity on mannan using GDP-mannose. The beta-1,4-mannan product is the backbone for galactomannan synthesis by galactomannan galactosyltransferase. Galactomannan is a noncellulosic polysaccharides of plant cell wall. The polypeptide is Glucomannan 4-beta-mannosyltransferase 2 (Arabidopsis thaliana (Mouse-ear cress)).